The primary structure comprises 239 residues: Fatty acid metabolism regulator protein (239 aa).

The HTH gntR-type domain maps to 6–74 (QSPAGFAEEY…HGKPTKVNNF (69 aa)). A DNA-binding region (H-T-H motif) is located at residues 34-53 (ERELSELIGVTRTTLREVLQ).

In terms of assembly, homodimer.

The protein localises to the cytoplasm. Its function is as follows. Multifunctional regulator of fatty acid metabolism. This chain is Fatty acid metabolism regulator protein, found in Salmonella paratyphi C (strain RKS4594).